We begin with the raw amino-acid sequence, 394 residues long: Phosphoglycerate kinase (394 aa).

Substrate contacts are provided by residues 21–23 (DFN), R36, 59–62 (HLGR), R118, and R151. S183 is modified (phosphoserine). ATP is bound by residues K201 and G292. Residue T299 is modified to Phosphothreonine. ATP contacts are provided by residues E323 and 350-353 (GGDS).

This sequence belongs to the phosphoglycerate kinase family. Monomer.

It is found in the cytoplasm. It catalyses the reaction (2R)-3-phosphoglycerate + ATP = (2R)-3-phospho-glyceroyl phosphate + ADP. Its pathway is carbohydrate degradation; glycolysis; pyruvate from D-glyceraldehyde 3-phosphate: step 2/5. In Bacillus cereus (strain G9842), this protein is Phosphoglycerate kinase.